Reading from the N-terminus, the 185-residue chain is Threonylcarbamoyl-AMP synthase (185 aa).

Residues 1 to 185 (MDNLQQVVSA…AFSDTVLRQG (185 aa)) form the YrdC-like domain.

The protein belongs to the SUA5 family. TsaC subfamily.

It localises to the cytoplasm. It carries out the reaction L-threonine + hydrogencarbonate + ATP = L-threonylcarbamoyladenylate + diphosphate + H2O. Its function is as follows. Required for the formation of a threonylcarbamoyl group on adenosine at position 37 (t(6)A37) in tRNAs that read codons beginning with adenine. Catalyzes the conversion of L-threonine, HCO(3)(-)/CO(2) and ATP to give threonylcarbamoyl-AMP (TC-AMP) as the acyladenylate intermediate, with the release of diphosphate. This Photobacterium profundum (strain SS9) protein is Threonylcarbamoyl-AMP synthase.